Here is a 606-residue protein sequence, read N- to C-terminus: Radial spoke head protein 3 homolog (606 aa).

The disordered stretch occupies residues 1 to 103; it reads MARSEARRQA…NSPEAPPLDG (103 aa). Residues 15-46 show a composition bias toward basic and acidic residues; the sequence is PRAVPEERALRERRQPRPRREPLESGAGDHRR. Threonine 331 carries the post-translational modification Phosphothreonine; by MAPK1. A coiled-coil region spans residues 393–429; it reads AYEELRNIELAEVQRLEEQERRHREEKERRKQQQWQV. The segment at 520 to 606 is disordered; sequence EGRHASVRPE…KSSKREELSQ (87 aa). Positions 547–556 are enriched in polar residues; it reads SQDQGASQAQ. Residues 572 to 604 are a coiled coil; the sequence is ARYAERVSSQERRLAEENDELTEMRKSSKREEL. A compositionally biased stretch (basic and acidic residues) spans 573 to 606; the sequence is RYAERVSSQERRLAEENDELTEMRKSSKREELSQ.

This sequence belongs to the flagellar radial spoke RSP3 family. In terms of assembly, component of the axonemal radial spoke 1 (RS1) and 2 (RS2) complexes, at least composed of spoke head proteins RSPH1, RSPH3, RSPH9 and the cilia-specific component RSPH4A or sperm-specific component RSPH6A, spoke stalk proteins RSPH14, DNAJB13, DYDC1, ROPN1L and NME5, and the RS1 complex-specific anchor protein IQUB. Interacts with IQUB. Interacts with phosphorylated MAPK1. Interacts with MEK1. Interacts with PKA regulatory subunits PRKAR1A and PRKAR1B. Interacts with RSPH1. Interacts with RSPH4A. Interacts with RSPH6A. Interacts with RSPH9. Interacts with LRRC23.

The protein resides in the cytoplasm. It localises to the cytoskeleton. It is found in the cilium axoneme. Its subcellular location is the flagellum axoneme. Functionally, functions as part of axonemal radial spoke complexes that play an important part in the motility of sperm and cilia. Functions as a protein kinase A-anchoring protein that scaffolds the cAMP-dependent protein kinase holoenzyme. May serve as a point of convergence for MAPK and PKA signaling in cilia. This is Radial spoke head protein 3 homolog (RSPH3) from Bos taurus (Bovine).